The chain runs to 342 residues: Anthranilate phosphoribosyltransferase (342 aa).

5-phospho-alpha-D-ribose 1-diphosphate contacts are provided by residues glycine 79, 82-83, threonine 87, 89-92, 107-115, and serine 119; these read GD, NVST, and KHGNRAATS. An anthranilate-binding site is contributed by glycine 79. Serine 91 serves as a coordination point for Mg(2+). An anthranilate-binding site is contributed by asparagine 110. Arginine 165 provides a ligand contact to anthranilate. Residues aspartate 224 and glutamate 225 each coordinate Mg(2+).

The protein belongs to the anthranilate phosphoribosyltransferase family. In terms of assembly, homodimer. Mg(2+) is required as a cofactor.

The enzyme catalyses N-(5-phospho-beta-D-ribosyl)anthranilate + diphosphate = 5-phospho-alpha-D-ribose 1-diphosphate + anthranilate. It participates in amino-acid biosynthesis; L-tryptophan biosynthesis; L-tryptophan from chorismate: step 2/5. Functionally, catalyzes the transfer of the phosphoribosyl group of 5-phosphorylribose-1-pyrophosphate (PRPP) to anthranilate to yield N-(5'-phosphoribosyl)-anthranilate (PRA). This Rubrobacter xylanophilus (strain DSM 9941 / JCM 11954 / NBRC 16129 / PRD-1) protein is Anthranilate phosphoribosyltransferase.